The primary structure comprises 161 residues: Cytochrome c-type biogenesis protein CcmE (161 aa).

Residues 1-8 (MNPVRKKR) are Cytoplasmic-facing. The helical; Signal-anchor for type II membrane protein transmembrane segment at 9 to 29 (LYIVLAILCGVSIAVALALTA) threads the bilayer. Residues 30 to 161 (LQENINLFYT…AKGYQQESAQ (132 aa)) are Periplasmic-facing. 2 residues coordinate heme: His-124 and Tyr-128.

The protein belongs to the CcmE/CycJ family.

The protein resides in the cell inner membrane. Heme chaperone required for the biogenesis of c-type cytochromes. Transiently binds heme delivered by CcmC and transfers the heme to apo-cytochromes in a process facilitated by CcmF and CcmH. The protein is Cytochrome c-type biogenesis protein CcmE of Ectopseudomonas mendocina (strain ymp) (Pseudomonas mendocina).